Reading from the N-terminus, the 188-residue chain is Protein K (188 aa).

The chain is Protein K (K) from Escherichia coli.